The primary structure comprises 232 residues: MAKLSKKQKNQAASVDSQKLYGVDEAIALAKQNATSKFDETIEVALNLGVDPRHADQMVRGVVTLPKGTGKDVRVGVFARGAKADEAKAAGAEVVGAEDLLETIQGGTVDFDRCIATPDMMGLVGRLGKILGPKGLMPNPKLGTVTMNVAEAVKAAKGGQVEFRVEKAGIIHSGIGKASFPAEDLRANFDAFVDAIVKAKPTGAKGKYLKKAAVSSTMGPGVKIDVADVAGA.

The protein belongs to the universal ribosomal protein uL1 family. As to quaternary structure, part of the 50S ribosomal subunit.

Binds directly to 23S rRNA. The L1 stalk is quite mobile in the ribosome, and is involved in E site tRNA release. Its function is as follows. Protein L1 is also a translational repressor protein, it controls the translation of the L11 operon by binding to its mRNA. This chain is Large ribosomal subunit protein uL1, found in Rhizorhabdus wittichii (strain DSM 6014 / CCUG 31198 / JCM 15750 / NBRC 105917 / EY 4224 / RW1) (Sphingomonas wittichii).